Reading from the N-terminus, the 327-residue chain is MENGIKESPVGLNKNGALAILPTPLVSEGHKNHKSVLNSLTSGALAGAVAKTAVAPLDRTKIIFQVSSNRFSAKEAYRLIYRTYMNDGFLSLWRGNSATMVRVIPYAAIQFCAHEQYKKLLGSYYGFQGSALTPIPRLLAGALAGTTATLLTYPLDLVRARMAVTQKEMYSNIIHVFMRMSREEGLKSLYRGFTPTVLGVIPYAGISFFTYETLKKLHAEHSGRTQPYTFERLLFGACAGLFGQSSSYPLDVVRRRMQTAGVTGHTYGSIIGTMQEIVAEEGFIRGLYKGLSMNWVKGPVAVGISFTTFDLTQILLKKLQQISHIQR.

Solcar repeat units follow at residues 34 to 120, 132 to 217, and 227 to 315; these read KSVL…YKKL, LTPI…LKKL, and PYTF…TQIL. Transmembrane regions (helical) follow at residues 36-56, 92-112, 138-158, 192-209, 233-253, and 296-316; these read VLNSLTSGALAGAVAKTAVAP, LWRGNSATMVRVIPYAAIQFC, LLAGALAGTTATLLTYPLDLV, GFTPTVLGVIPYAGISFF, LLFGACAGLFGQSSSYPLDVV, and VKGPVAVGISFTTFDLTQILL.

The protein belongs to the mitochondrial carrier (TC 2.A.29) family.

The protein localises to the mitochondrion inner membrane. It catalyses the reaction ADP(out) + CoA(in) = ADP(in) + CoA(out). It carries out the reaction 3'-dephospho-CoA(in) + ADP(out) = 3'-dephospho-CoA(out) + ADP(in). The enzyme catalyses adenosine 3',5'-bisphosphate(in) + ADP(out) = adenosine 3',5'-bisphosphate(out) + ADP(in). The catalysed reaction is AMP(in) + ADP(out) = AMP(out) + ADP(in). It catalyses the reaction dADP(in) + ADP(out) = dADP(out) + ADP(in). It carries out the reaction ADP(in) + ATP(out) = ADP(out) + ATP(in). Functionally, mitochondrial carrier mediating the transport of coenzyme A (CoA) in mitochondria in exchange for intramitochondrial (deoxy)adenine nucleotides and adenosine 3',5'-diphosphate. In Xenopus laevis (African clawed frog), this protein is Mitochondrial coenzyme A transporter SLC25A42 (slc25a42).